The chain runs to 69 residues: Toxin Tma3 (69 aa).

The LCN-type CS-alpha/beta domain occupies 2–66; that stretch reads KDDYPVDTAK…SPTKKSGRCN (65 aa). 4 disulfides stabilise this stretch: Cys14–Cys65, Cys18–Cys41, Cys27–Cys48, and Cys31–Cys50.

The protein belongs to the long (4 C-C) scorpion toxin superfamily. Sodium channel inhibitor family. In terms of tissue distribution, expressed by the venom gland.

The protein localises to the secreted. Inhibits voltage-gated sodium channels (Nav). This toxin shows insect lethality against crickets. This is Toxin Tma3 from Tityus macrochirus (Scorpion).